Consider the following 60-residue polypeptide: Colanic acid capsular biosynthesis activation protein B (60 aa).

This chain is Colanic acid capsular biosynthesis activation protein B (rcsB), found in Klebsiella aerogenes (Enterobacter aerogenes).